Reading from the N-terminus, the 98-residue chain is (4S)-4-hydroxy-5-phosphonooxypentane-2,3-dione isomerase (98 aa).

Residues 2–91 (NVTLVEINIK…MSQPRQKRSF (90 aa)) enclose the ABM domain.

It belongs to the LsrG family. As to quaternary structure, homodimer.

The protein localises to the cytoplasm. It carries out the reaction (2S)-2-hydroxy-3,4-dioxopentyl phosphate = 3-hydroxy-2,4-dioxopentyl phosphate. In terms of biological role, involved in the degradation of phospho-AI-2, thereby terminating induction of the lsr operon and closing the AI-2 signaling cycle. Catalyzes the conversion of (4S)-4-hydroxy-5-phosphonooxypentane-2,3-dione (P-DPD) to 3-hydroxy-5-phosphonooxypentane-2,4-dione (P-HPD). This chain is (4S)-4-hydroxy-5-phosphonooxypentane-2,3-dione isomerase, found in Klebsiella pneumoniae subsp. pneumoniae (strain ATCC 700721 / MGH 78578).